Here is a 513-residue protein sequence, read N- to C-terminus: Probable cytosol aminopeptidase (513 aa).

Residues Lys-277 and Asp-282 each contribute to the Mn(2+) site. Residue Lys-289 is part of the active site. 3 residues coordinate Mn(2+): Asp-300, Asp-359, and Glu-361. Residue Arg-363 is part of the active site.

It belongs to the peptidase M17 family. Mn(2+) is required as a cofactor.

The protein localises to the cytoplasm. It carries out the reaction Release of an N-terminal amino acid, Xaa-|-Yaa-, in which Xaa is preferably Leu, but may be other amino acids including Pro although not Arg or Lys, and Yaa may be Pro. Amino acid amides and methyl esters are also readily hydrolyzed, but rates on arylamides are exceedingly low.. The enzyme catalyses Release of an N-terminal amino acid, preferentially leucine, but not glutamic or aspartic acids.. Presumably involved in the processing and regular turnover of intracellular proteins. Catalyzes the removal of unsubstituted N-terminal amino acids from various peptides. The protein is Probable cytosol aminopeptidase of Mycobacterium sp. (strain KMS).